Reading from the N-terminus, the 558-residue chain is WW domain-containing adapter protein with coiled-coil (558 aa).

3 disordered regions span residues 1 to 129 (MVMY…WSEH), 159 to 244 (QRQK…SPAP), and 321 to 461 (VAQQ…APGR). The segment covering 22–32 (QPYQTLKYSSK) has biased composition (polar residues). 2 stretches are compositionally biased toward basic and acidic residues: residues 33 to 46 (SHPD…RDSN) and 56 to 70 (RRSD…DNTG). Residues 72–82 (GRAKAIHPHRG) show a composition bias toward basic residues. Positions 99–116 (NHSSLHSSNSHSNPNKSS) are enriched in low complexity. The region spanning 120–153 (FEPADDWSEHISSSGKKYYYNCRTEVSQWEKPKE) is the WW domain. A compositionally biased stretch (basic and acidic residues) spans 175-184 (PKDRDYRREA). Residues 188–200 (TPASYSSTKSSIA) are compositionally biased toward polar residues. A compositionally biased stretch (low complexity) spans 204–217 (PSSLTPSSSSAAVS). Polar residues-rich tracts occupy residues 223-234 (NSASSASGSTVP) and 321-378 (VAQQ…MTVK). Residues 402-431 (SPRTLQRQSSQRSPSPGPNHMGSNSSSSSN) are compositionally biased toward low complexity. The segment covering 432–443 (NGGGGGGQGPGV) has biased composition (gly residues). A coiled-coil region spans residues 529–555 (QATLREQRILFLRQQIKELEKLKNQNS).

The protein resides in the nucleus. Its function is as follows. Acts as a linker between gene transcription and histone H2B monoubiquitination at 'Lys-120' (H2BK120ub1). Positive regulator of amino acid starvation-induced autophagy. Positively regulates MTOR activity. May negatively regulate the ubiquitin proteasome pathway. This Danio rerio (Zebrafish) protein is WW domain-containing adapter protein with coiled-coil (waca).